We begin with the raw amino-acid sequence, 285 residues long: Bifunctional protein FolD (285 aa).

Residues 169–171 (GRS), Ser-194, and Ile-235 contribute to the NADP(+) site.

The protein belongs to the tetrahydrofolate dehydrogenase/cyclohydrolase family. As to quaternary structure, homodimer.

It carries out the reaction (6R)-5,10-methylene-5,6,7,8-tetrahydrofolate + NADP(+) = (6R)-5,10-methenyltetrahydrofolate + NADPH. The enzyme catalyses (6R)-5,10-methenyltetrahydrofolate + H2O = (6R)-10-formyltetrahydrofolate + H(+). It functions in the pathway one-carbon metabolism; tetrahydrofolate interconversion. Functionally, catalyzes the oxidation of 5,10-methylenetetrahydrofolate to 5,10-methenyltetrahydrofolate and then the hydrolysis of 5,10-methenyltetrahydrofolate to 10-formyltetrahydrofolate. The chain is Bifunctional protein FolD from Microcystis aeruginosa (strain NIES-843 / IAM M-2473).